The sequence spans 277 residues: S-formylglutathione hydrolase FrmB (277 aa).

Residues serine 145, aspartate 221, and histidine 254 each act as charge relay system in the active site.

The protein belongs to the esterase D family.

It catalyses the reaction S-formylglutathione + H2O = formate + glutathione + H(+). Functionally, serine hydrolase involved in the detoxification of formaldehyde. Hydrolyzes S-formylglutathione to glutathione and formate. The protein is S-formylglutathione hydrolase FrmB (frmB) of Escherichia coli O6:H1 (strain CFT073 / ATCC 700928 / UPEC).